A 306-amino-acid chain; its full sequence is Homeobox protein HMX3 (306 aa).

A disordered region spans residues 95 to 181 (HTPRTEVPDK…DKKPCRKKKT (87 aa)). Basic and acidic residues-rich tracts occupy residues 117-143 (GERD…KSPE) and 153-174 (EEGK…PDKK). A DNA-binding region (homeobox) is located at residues 178–237 (KKKTRTVFSRSQVFQLESTFDMKRYLSSSERAGLAASLHLTETQVKIWFQNRRNKWKRQL).

The protein belongs to the HMX homeobox family.

The protein resides in the nucleus. In terms of biological role, transcription factor involved in specification of neuronal cell types and which is required for inner ear and hypothalamus development. Binds to the 5'-CAAGTG-3' core sequence. May act as a stage-specific inhibitor of anf1 in the anterior neural plate during the development. This Xenopus tropicalis (Western clawed frog) protein is Homeobox protein HMX3 (hmx3).